We begin with the raw amino-acid sequence, 279 residues long: Large ribosomal subunit protein uL2 (279 aa).

Residues 223-279 (TVRGSAMNPNDHPHGGGEGRSPVGMDAPRTPWGKRHMGVKTRNNKKSSTSMIVRRRK) form a disordered region. The span at 254-267 (WGKRHMGVKTRNNK) shows a compositional bias: basic residues.

This sequence belongs to the universal ribosomal protein uL2 family. As to quaternary structure, part of the 50S ribosomal subunit. Forms a bridge to the 30S subunit in the 70S ribosome.

Functionally, one of the primary rRNA binding proteins. Required for association of the 30S and 50S subunits to form the 70S ribosome, for tRNA binding and peptide bond formation. It has been suggested to have peptidyltransferase activity; this is somewhat controversial. Makes several contacts with the 16S rRNA in the 70S ribosome. The polypeptide is Large ribosomal subunit protein uL2 (Ureaplasma urealyticum serovar 10 (strain ATCC 33699 / Western)).